Consider the following 123-residue polypeptide: Large ribosomal subunit protein uL14 (123 aa).

It belongs to the universal ribosomal protein uL14 family. Part of the 50S ribosomal subunit. Forms a cluster with proteins L3 and L19. In the 70S ribosome, L14 and L19 interact and together make contacts with the 16S rRNA in bridges B5 and B8.

In terms of biological role, binds to 23S rRNA. Forms part of two intersubunit bridges in the 70S ribosome. In Escherichia coli O139:H28 (strain E24377A / ETEC), this protein is Large ribosomal subunit protein uL14.